Here is a 72-residue protein sequence, read N- to C-terminus: Large ribosomal subunit protein bL28 (72 aa).

Belongs to the bacterial ribosomal protein bL28 family.

This is Large ribosomal subunit protein bL28 from Chlorobium luteolum (strain DSM 273 / BCRC 81028 / 2530) (Pelodictyon luteolum).